The chain runs to 141 residues: Galactose-6-phosphate isomerase subunit LacA (141 aa).

It belongs to the LacAB/RpiB family. In terms of assembly, heteromultimeric protein consisting of LacA and LacB.

It catalyses the reaction aldehydo-D-galactose 6-phosphate = keto-D-tagatose 6-phosphate. It participates in carbohydrate metabolism; D-galactose 6-phosphate degradation; D-tagatose 6-phosphate from D-galactose 6-phosphate: step 1/1. The polypeptide is Galactose-6-phosphate isomerase subunit LacA (Streptococcus pneumoniae (strain Taiwan19F-14)).